A 215-amino-acid polypeptide reads, in one-letter code: Cytochrome b6 (215 aa).

The helical transmembrane segment at isoleucine 32–phenylalanine 52 threads the bilayer. Cysteine 35 provides a ligand contact to heme c. Residues histidine 86 and histidine 100 each coordinate heme b. 3 helical membrane-spanning segments follow: residues alanine 90 to phenylalanine 110, leucine 116 to tyrosine 136, and leucine 186 to isoleucine 206. Heme b-binding residues include histidine 187 and histidine 202.

It belongs to the cytochrome b family. PetB subfamily. The 4 large subunits of the cytochrome b6-f complex are cytochrome b6, subunit IV (17 kDa polypeptide, PetD), cytochrome f and the Rieske protein, while the 4 small subunits are PetG, PetL, PetM and PetN. The complex functions as a dimer. It depends on heme b as a cofactor. Heme c is required as a cofactor.

The protein resides in the plastid. It localises to the chloroplast thylakoid membrane. Component of the cytochrome b6-f complex, which mediates electron transfer between photosystem II (PSII) and photosystem I (PSI), cyclic electron flow around PSI, and state transitions. In Nephroselmis olivacea (Green alga), this protein is Cytochrome b6.